We begin with the raw amino-acid sequence, 207 residues long: Small ribosomal subunit protein uS4 (207 aa).

A compositionally biased stretch (basic and acidic residues) spans 29–38 (QDKAKFDSKP). The interval 29 to 54 (QDKAKFDSKPGQHGRTSGQRTSDYGL) is disordered. Residues 42–52 (GRTSGQRTSDY) show a composition bias toward polar residues. The 64-residue stretch at 97-160 (SRLDNVVYRM…KKQTRIAEAL (64 aa)) folds into the S4 RNA-binding domain.

This sequence belongs to the universal ribosomal protein uS4 family. As to quaternary structure, part of the 30S ribosomal subunit. Contacts protein S5. The interaction surface between S4 and S5 is involved in control of translational fidelity.

Its function is as follows. One of the primary rRNA binding proteins, it binds directly to 16S rRNA where it nucleates assembly of the body of the 30S subunit. Functionally, with S5 and S12 plays an important role in translational accuracy. The polypeptide is Small ribosomal subunit protein uS4 (Variovorax paradoxus (strain S110)).